The chain runs to 461 residues: Phosphoglucosamine mutase (461 aa).

Residue S107 is the Phosphoserine intermediate of the active site. The Mg(2+) site is built by S107, D254, D256, and D258. S107 bears the Phosphoserine mark.

The protein belongs to the phosphohexose mutase family. Mg(2+) is required as a cofactor. In terms of processing, activated by phosphorylation.

The enzyme catalyses alpha-D-glucosamine 1-phosphate = D-glucosamine 6-phosphate. Its function is as follows. Catalyzes the conversion of glucosamine-6-phosphate to glucosamine-1-phosphate. The protein is Phosphoglucosamine mutase of Bifidobacterium longum subsp. infantis (strain ATCC 15697 / DSM 20088 / JCM 1222 / NCTC 11817 / S12).